Here is a 379-residue protein sequence, read N- to C-terminus: Omega-3 fatty acid desaturase, endoplasmic reticulum (379 aa).

A helical membrane pass occupies residues 52 to 72 (LSYVVRDVIFVATLIGIAIHL). Residues 97 to 101 (HDCGH) carry the Histidine box-1 motif. The Histidine box-2 signature appears at 133-137 (HKTHH). 2 consecutive transmembrane segments (helical) span residues 213–233 (TLCW…FGSL) and 236–256 (FKIY…VTYL). A Histidine box-3 motif is present at residues 300-304 (HVIHH).

It belongs to the fatty acid desaturase type 1 family.

It is found in the endoplasmic reticulum membrane. The protein operates within lipid metabolism; polyunsaturated fatty acid biosynthesis. In terms of biological role, ER (microsomal) omega-3 fatty acid desaturase introduces the third double bond in the biosynthesis of 18:3 fatty acids, important constituents of plant membranes. It is thought to use cytochrome b5 as an electron donor and to act on fatty acids esterified to phosphatidylcholine and, possibly, other phospholipids. This is Omega-3 fatty acid desaturase, endoplasmic reticulum (FAD3) from Nicotiana tabacum (Common tobacco).